Consider the following 429-residue polypeptide: CinA-like protein (429 aa).

It belongs to the CinA family.

In Chlorobium limicola (strain DSM 245 / NBRC 103803 / 6330), this protein is CinA-like protein.